Consider the following 301-residue polypeptide: Probable 5-dehydro-4-deoxyglucarate dehydratase (301 aa).

This sequence belongs to the DapA family.

The catalysed reaction is 5-dehydro-4-deoxy-D-glucarate + H(+) = 2,5-dioxopentanoate + CO2 + H2O. It functions in the pathway carbohydrate acid metabolism; D-glucarate degradation; 2,5-dioxopentanoate from D-glucarate: step 2/2. This chain is Probable 5-dehydro-4-deoxyglucarate dehydratase, found in Cereibacter sphaeroides (strain ATCC 17023 / DSM 158 / JCM 6121 / CCUG 31486 / LMG 2827 / NBRC 12203 / NCIMB 8253 / ATH 2.4.1.) (Rhodobacter sphaeroides).